A 195-amino-acid chain; its full sequence is Protein GrpE (195 aa).

Residues 1 to 18 (MDPKEKKTKQEEELKVDD) are compositionally biased toward basic and acidic residues. Residues 1–41 (MDPKEKKTKQEEELKVDDIQDTVEGQSQNEEATEATEPLTA) form a disordered region.

This sequence belongs to the GrpE family. As to quaternary structure, homodimer.

The protein resides in the cytoplasm. Its function is as follows. Participates actively in the response to hyperosmotic and heat shock by preventing the aggregation of stress-denatured proteins, in association with DnaK and GrpE. It is the nucleotide exchange factor for DnaK and may function as a thermosensor. Unfolded proteins bind initially to DnaJ; upon interaction with the DnaJ-bound protein, DnaK hydrolyzes its bound ATP, resulting in the formation of a stable complex. GrpE releases ADP from DnaK; ATP binding to DnaK triggers the release of the substrate protein, thus completing the reaction cycle. Several rounds of ATP-dependent interactions between DnaJ, DnaK and GrpE are required for fully efficient folding. The protein is Protein GrpE of Bacteroides fragilis (strain ATCC 25285 / DSM 2151 / CCUG 4856 / JCM 11019 / LMG 10263 / NCTC 9343 / Onslow / VPI 2553 / EN-2).